A 204-amino-acid polypeptide reads, in one-letter code: Thiamine-phosphate synthase (204 aa).

4-amino-2-methyl-5-(diphosphooxymethyl)pyrimidine is bound by residues 35-39 (QVREK) and Asn67. The Mg(2+) site is built by Asp68 and Asp87. Ser106 contacts 4-amino-2-methyl-5-(diphosphooxymethyl)pyrimidine. 132–134 (TPT) lines the 2-[(2R,5Z)-2-carboxy-4-methylthiazol-5(2H)-ylidene]ethyl phosphate pocket. Lys135 lines the 4-amino-2-methyl-5-(diphosphooxymethyl)pyrimidine pocket. 2-[(2R,5Z)-2-carboxy-4-methylthiazol-5(2H)-ylidene]ethyl phosphate-binding positions include Gly163 and 183 to 184 (VS).

Belongs to the thiamine-phosphate synthase family. Requires Mg(2+) as cofactor.

It catalyses the reaction 2-[(2R,5Z)-2-carboxy-4-methylthiazol-5(2H)-ylidene]ethyl phosphate + 4-amino-2-methyl-5-(diphosphooxymethyl)pyrimidine + 2 H(+) = thiamine phosphate + CO2 + diphosphate. The enzyme catalyses 2-(2-carboxy-4-methylthiazol-5-yl)ethyl phosphate + 4-amino-2-methyl-5-(diphosphooxymethyl)pyrimidine + 2 H(+) = thiamine phosphate + CO2 + diphosphate. It carries out the reaction 4-methyl-5-(2-phosphooxyethyl)-thiazole + 4-amino-2-methyl-5-(diphosphooxymethyl)pyrimidine + H(+) = thiamine phosphate + diphosphate. It participates in cofactor biosynthesis; thiamine diphosphate biosynthesis; thiamine phosphate from 4-amino-2-methyl-5-diphosphomethylpyrimidine and 4-methyl-5-(2-phosphoethyl)-thiazole: step 1/1. Functionally, condenses 4-methyl-5-(beta-hydroxyethyl)thiazole monophosphate (THZ-P) and 2-methyl-4-amino-5-hydroxymethyl pyrimidine pyrophosphate (HMP-PP) to form thiamine monophosphate (TMP). The chain is Thiamine-phosphate synthase from Vibrio campbellii (strain ATCC BAA-1116).